We begin with the raw amino-acid sequence, 264 residues long: Acyl-[acyl-carrier-protein]--UDP-N-acetylglucosamine O-acyltransferase (264 aa).

The protein belongs to the transferase hexapeptide repeat family. LpxA subfamily. Homotrimer.

The protein localises to the cytoplasm. The catalysed reaction is a (3R)-hydroxyacyl-[ACP] + UDP-N-acetyl-alpha-D-glucosamine = a UDP-3-O-[(3R)-3-hydroxyacyl]-N-acetyl-alpha-D-glucosamine + holo-[ACP]. It participates in glycolipid biosynthesis; lipid IV(A) biosynthesis; lipid IV(A) from (3R)-3-hydroxytetradecanoyl-[acyl-carrier-protein] and UDP-N-acetyl-alpha-D-glucosamine: step 1/6. In terms of biological role, involved in the biosynthesis of lipid A, a phosphorylated glycolipid that anchors the lipopolysaccharide to the outer membrane of the cell. This is Acyl-[acyl-carrier-protein]--UDP-N-acetylglucosamine O-acyltransferase from Haemophilus ducreyi (strain 35000HP / ATCC 700724).